Here is a 173-residue protein sequence, read N- to C-terminus: Crossover junction endodeoxyribonuclease RuvC (173 aa).

Catalysis depends on residues Asp8, Glu67, and Asp139. Residues Asp8, Glu67, and Asp139 each contribute to the Mg(2+) site.

It belongs to the RuvC family. Homodimer which binds Holliday junction (HJ) DNA. The HJ becomes 2-fold symmetrical on binding to RuvC with unstacked arms; it has a different conformation from HJ DNA in complex with RuvA. In the full resolvosome a probable DNA-RuvA(4)-RuvB(12)-RuvC(2) complex forms which resolves the HJ. Mg(2+) serves as cofactor.

It is found in the cytoplasm. It catalyses the reaction Endonucleolytic cleavage at a junction such as a reciprocal single-stranded crossover between two homologous DNA duplexes (Holliday junction).. Its function is as follows. The RuvA-RuvB-RuvC complex processes Holliday junction (HJ) DNA during genetic recombination and DNA repair. Endonuclease that resolves HJ intermediates. Cleaves cruciform DNA by making single-stranded nicks across the HJ at symmetrical positions within the homologous arms, yielding a 5'-phosphate and a 3'-hydroxyl group; requires a central core of homology in the junction. The consensus cleavage sequence is 5'-(A/T)TT(C/G)-3'. Cleavage occurs on the 3'-side of the TT dinucleotide at the point of strand exchange. HJ branch migration catalyzed by RuvA-RuvB allows RuvC to scan DNA until it finds its consensus sequence, where it cleaves and resolves the cruciform DNA. The sequence is that of Crossover junction endodeoxyribonuclease RuvC from Salmonella arizonae (strain ATCC BAA-731 / CDC346-86 / RSK2980).